A 133-amino-acid polypeptide reads, in one-letter code: ATP synthase epsilon chain, chloroplastic (133 aa).

The protein belongs to the ATPase epsilon chain family. In terms of assembly, F-type ATPases have 2 components, CF(1) - the catalytic core - and CF(0) - the membrane proton channel. CF(1) has five subunits: alpha(3), beta(3), gamma(1), delta(1), epsilon(1). CF(0) has three main subunits: a, b and c.

It is found in the plastid. It localises to the chloroplast thylakoid membrane. In terms of biological role, produces ATP from ADP in the presence of a proton gradient across the membrane. The sequence is that of ATP synthase epsilon chain, chloroplastic from Zygnema circumcarinatum (Green alga).